The sequence spans 237 residues: CD63 antigen (237 aa).

The Cytoplasmic portion of the chain corresponds to 1-11 (MAVEGGMKCVK). The helical transmembrane segment at 12 to 32 (FLLYVLLLVFCACAVGLIAVG) threads the bilayer. Residues 33-51 (VGTHLVLNQTITHGATPSF) lie on the Extracellular side of the membrane. Asn-40 is a glycosylation site (N-linked (GlcNAc...) asparagine). A helical membrane pass occupies residues 52–72 (LLPVVIIAVGAFLFLVAFVGC). Residues 73 to 81 (CGACKENYC) lie on the Cytoplasmic side of the membrane. A helical transmembrane segment spans residues 82–102 (LMITFAIFLSLIMLVEVAAAI). The Extracellular segment spans residues 103 to 202 (AGYVFRDKVR…KIAAWLRKNV (100 aa)). N-linked (GlcNAc...) asparagine glycosylation is found at Asn-130, Asn-150, and Asn-171. Residues 203 to 223 (LVVAAAALGIAFVEILGIVLA) form a helical membrane-spanning segment. Topologically, residues 224–237 (CCLVKSIRSGYEVM) are cytoplasmic. Residues 233 to 237 (GYEVM) carry the Lysosomal targeting motif motif.

The protein belongs to the tetraspanin (TM4SF) family. In terms of assembly, interacts with TIMP1 and ITGB1 and recruits TIMP1 to ITGB1. Interacts with CD9. Identified in a complex with CD9 and ITGB3. Interacts with PMEL. Interacts with KDR/VEGFR2; identified in a complex with ITGB1 and KDR/VEGFR2 and is required to recruit KDR to ITGB1 complexes. Interacts with SYT7. In terms of processing, palmitoylated at a low, basal level in unstimulated platelets. The level of palmitoylation increases when platelets are activated by thrombin (in vitro).

The protein resides in the cell membrane. It localises to the lysosome membrane. It is found in the late endosome membrane. The protein localises to the endosome. Its subcellular location is the multivesicular body. The protein resides in the melanosome. It localises to the secreted. It is found in the extracellular exosome. The protein localises to the cell surface. Functions as a cell surface receptor for TIMP1 and plays a role in the activation of cellular signaling cascades. Plays a role in the activation of ITGB1 and integrin signaling, leading to the activation of AKT, FAK/PTK2 and MAP kinases. Promotes cell survival, reorganization of the actin cytoskeleton, cell adhesion, spreading and migration, via its role in the activation of AKT and FAK/PTK2. Plays a role in VEGFA signaling via its role in regulating the internalization of KDR/VEGFR2. Plays a role in intracellular vesicular transport processes, and is required for normal trafficking of the PMEL luminal domain that is essential for the development and maturation of melanocytes. Plays a role in the adhesion of leukocytes onto endothelial cells via its role in the regulation of SELP trafficking. May play a role in mast cell degranulation in response to Ms4a2/FceRI stimulation, but not in mast cell degranulation in response to other stimuli. This Bos taurus (Bovine) protein is CD63 antigen (CD63).